Reading from the N-terminus, the 332-residue chain is Anthranilate phosphoribosyltransferase (332 aa).

5-phospho-alpha-D-ribose 1-diphosphate contacts are provided by residues Gly-79, 82-83, Thr-87, 89-92, 107-115, and Ser-119; these read GD, NIST, and KHGNRSVSS. Anthranilate is bound at residue Gly-79. Ser-91 lines the Mg(2+) pocket. Position 110 (Asn-110) interacts with anthranilate. Arg-165 lines the anthranilate pocket. Mg(2+) is bound by residues Asp-223 and Glu-224.

It belongs to the anthranilate phosphoribosyltransferase family. Homodimer. Requires Mg(2+) as cofactor.

It carries out the reaction N-(5-phospho-beta-D-ribosyl)anthranilate + diphosphate = 5-phospho-alpha-D-ribose 1-diphosphate + anthranilate. The protein operates within amino-acid biosynthesis; L-tryptophan biosynthesis; L-tryptophan from chorismate: step 2/5. Its function is as follows. Catalyzes the transfer of the phosphoribosyl group of 5-phosphorylribose-1-pyrophosphate (PRPP) to anthranilate to yield N-(5'-phosphoribosyl)-anthranilate (PRA). In Vibrio parahaemolyticus serotype O3:K6 (strain RIMD 2210633), this protein is Anthranilate phosphoribosyltransferase.